A 509-amino-acid polypeptide reads, in one-letter code: MFS antiporter QDR1 (509 aa).

The Cytoplasmic portion of the chain corresponds to 1-41 (MPGNREEFDIEKVLKSKKLEAIETSTEKKAPYTVFESTDKL). The chain crosses the membrane as a helical span at residues 42-62 (LLIIVLSLVGFWSAISSPIYF). At 63–75 (PALPTLTKYFNTT) the chain is on the extracellular side. Residues 76 to 96 (PSVMNISVVAYLIFQGIAPTI) form a helical membrane-spanning segment. Topologically, residues 97 to 106 (SSNLADTFGR) are cytoplasmic. A helical membrane pass occupies residues 107–129 (RPVILGSIIVFCAVCIAISQTNV). Residues 130–132 (YWL) are Extracellular-facing. The chain crosses the membrane as a helical span at residues 133–155 (LALLRCFQAAGIAPVFAISSGVA). Topologically, residues 156-169 (GDICTPANRGGMVG) are cytoplasmic. A helical transmembrane segment spans residues 170-190 (AVSGLQLAGNGIGGLVGAALI). Residues 191-197 (SGFHTWR) are Extracellular-facing. The chain crosses the membrane as a helical span at residues 198 to 218 (AIFIFLAIGGGVTFIFAFLVL). Residues 219–278 (AETSRRIVGNGSIRPKNVLNKAVLIYLPHFKNKITNDYSTLQPKGPFDILGPFKIFFQKE) are Cytoplasmic-facing. Residues 279 to 299 (VFCTLLPSGMHFAAWTVSLTS) form a helical membrane-spanning segment. The Extracellular segment spans residues 300 to 312 (LSTELESAKYNYS). Residues 313-333 (VMKVGLVYLPQGIACFIGSLI) form a helical membrane-spanning segment. Residues 334-370 (AGRCLNWYYRYRKNLYDKQMNDVPLNDRPPFNLVASR) lie on the Cytoplasmic side of the membrane. The chain crosses the membrane as a helical span at residues 371–391 (LTLTIVPLAMMVIGLSAFGWC). Residues 392-397 (LEYKKP) lie on the Extracellular side of the membrane. Residues 398 to 418 (IISIIISTILISFSASVMMSI) traverse the membrane as a helical segment. At 419 to 432 (CTTMLVDLYPKQSG) the chain is on the cytoplasmic side. The chain crosses the membrane as a helical span at residues 433–453 (ASASCVNLMRCWLAALFTGVL). Residues 454-455 (DK) are Extracellular-facing. A helical membrane pass occupies residues 456 to 476 (IISALGLGGTYTLLTGICLLT). The Cytoplasmic segment spans residues 477-509 (DLGLVYVLYTANQRFVNYVSPNQTAVNSDAEDY).

It belongs to the major facilitator superfamily. CAR1 family.

It is found in the cell membrane. MFS antiporter that does not display functional linkage as drug transporter and performs functions that significantly affect biofilm development and virulence. No substrate for transport has been identified yet, but plays an important role in the growth in the host. The protein is MFS antiporter QDR1 (QDR) of Candida albicans (strain SC5314 / ATCC MYA-2876) (Yeast).